A 392-amino-acid polypeptide reads, in one-letter code: Vascular endothelial growth factor A, long form (392 aa).

Disordered stretches follow at residues 1 to 44 (MTDR…VEGV) and 73 to 174 (DKPI…GPGR). Basic and acidic residues predominate over residues 89-104 (PGPEKRGEEEKEEERG). Composition is skewed to low complexity over residues 121–143 (AAVC…ASVP) and 158–174 (PRSP…GPGR). Cystine bridges form between cysteine 229–cysteine 271, cysteine 260–cysteine 305, and cysteine 264–cysteine 307. Asparagine 278 carries an N-linked (GlcNAc...) asparagine glycan. Residues 309 to 320 (PKKDRTKPEKKS) show a composition bias toward basic and acidic residues. The interval 309 to 337 (PKKDRTKPEKKSVRGKGKGQKRKRKKSRF) is disordered. The span at 321-337 (VRGKGKGQKRKRKKSRF) shows a compositional bias: basic residues.

Belongs to the PDGF/VEGF growth factor family. Homodimer; disulfide-linked. Also found as heterodimer with PGF. Interacts with NRP1. Interacts with isoform 2 of BSG. Interacts with CD82; this interaction inhibits VEGFA-mediated signaling pathway. Produced by use of an alternative upstream CUG codon and post-translationally processed into the N-terminal N-VEGF form and the C-terminal secreted VEGFA form. In developing embryos, expressed mainly in the choroid plexus, paraventricular neuroepithelium, placenta and kidney glomeruli. Also found in bronchial epithelium, adrenal gland and in seminiferous tubules of testis. High expression continues in kidney glomeruli and choroid plexus in adults.

The protein resides in the cytoplasm. The protein localises to the nucleus. It localises to the secreted. Its subcellular location is the endoplasmic reticulum. It is found in the golgi apparatus. The protein resides in the extracellular space. The protein localises to the extracellular matrix. It localises to the cell membrane. Its function is as follows. Participates in the induction of key genes involved in the response to hypoxia and in the induction of angiogenesis such as HIF1A. Involved in protecting cells from hypoxia-mediated cell death. Functionally, growth factor active in angiogenesis, vasculogenesis and endothelial cell growth. Induces endothelial cell proliferation, promotes cell migration, inhibits apoptosis and induces permeabilization of blood vessels. Binds to the FLT1/VEGFR1 and KDR/VEGFR2 receptors, heparan sulfate and heparin. Binds to the NRP1/neuropilin-1 receptor. Binding to NRP1 receptor initiates a signaling pathway needed for motor neuron axon guidance and cell body migration, including for the caudal migration of facial motor neurons from rhombomere 4 to rhombomere 6 during embryonic development. Also binds the DEAR/FBXW7-AS1 receptor. May play a role in increasing vascular permeability during lactation, when increased transport of molecules from the blood is required for efficient milk protein synthesis. This is Vascular endothelial growth factor A, long form (Vegfa) from Mus musculus (Mouse).